Consider the following 484-residue polypeptide: Pre-glycoprotein polyprotein GP complex (484 aa).

Residue Gly2 is the site of N-myristoyl glycine; by host attachment. The Extracellular segment spans residues 2-17 (GQLVSFFQEIPNIIQE). A helical membrane pass occupies residues 18-33 (AINIALIAVSLIAILK). The Cytoplasmic segment spans residues 34-58 (GLVNLWKSGLFQLLVFLILAGRSCS). A Zn(2+)-binding site is contributed by Cys57. Over 59-423 (FKIGRSTELQ…QGKTPITLVD (365 aa)) the chain is Extracellular. Intrachain disulfides connect Cys85–Cys225, Cys270–Cys283, Cys292–Cys301, and Cys355–Cys376. Residues Asn88, Asn125, Asn178, and Asn218 are each glycosylated (N-linked (GlcNAc...) asparagine; by host). Residues Asn356, Asn364, Asn381, and Asn386 are each glycosylated (N-linked (GlcNAc...) asparagine; by host). The helical transmembrane segment at 424 to 444 (ICFWSTLFFTTTLFLHLVGFP) threads the bilayer. Topologically, residues 445 to 484 (THRHIQGEPCPLPHKLNSNGGCRCGRYPELKKPTTWHRKH) are cytoplasmic. His446, His448, Cys454, His458, Cys466, Cys468, and His484 together coordinate Zn(2+).

The protein belongs to the arenaviridae GPC protein family. In terms of assembly, interacts with glycoprotein G2. Part of the GP complex (GP-C) together with glycoprotein G1 and glycoprotein G2. The GP-complex interacts with protein Z, which interacts with ribonucleocapsid; these interactions may induce virion budding. As to quaternary structure, homotrimer; disulfide-linked. In pre-fusion state, G1 homotrimers bind G2 homotrimers via ionic interactions. Part of the GP complex (GP-C) together with glycoprotein G2 and the stable signal peptide. The GP-complex interacts with protein Z, which interacts with ribonucleocapsid; these interactions may induce virion budding. Homotrimer. Interacts with the stable signal peptide. In pre-fusion state, G2 homotrimers bind G1 homotrimers via ionic interactions. Part of the GP complex (GP-C) together with glycoprotein G1 and the stable signal peptide. Acidification in the endosome triggers rearrangements, which ultimately leads to a 6 helix bundle formed by the two heptad repeat domains (HR1 and HR2) in post-fusion state. The GP-complex interacts with protein Z, which interacts with ribonucleocapsid; these interactions may induce virion budding. In terms of processing, specific enzymatic cleavages in vivo yield mature proteins. GP-C polyprotein is cleaved in the endoplasmic reticulum by the host protease MBTPS1. Only cleaved glycoprotein is incorporated into virions. The SSP remains stably associated with the GP complex following cleavage by signal peptidase and plays crucial roles in the trafficking of GP through the secretory pathway. Post-translationally, myristoylation is necessary for GP2-mediated fusion activity.

Its subcellular location is the virion membrane. It is found in the host endoplasmic reticulum membrane. The protein localises to the host Golgi apparatus membrane. It localises to the host cell membrane. In terms of biological role, functions as a cleaved signal peptide that is retained as the third component of the GP complex (GP-C). Helps to stabilize the spike complex in its native conformation. The SSP is required for efficient glycoprotein expression, post-translational maturation cleavage of G1 and G2, glycoprotein transport to the cell surface plasma membrane, formation of infectious virus particles, and acid pH-dependent glycoprotein-mediated cell fusion. Glycoprotein G1: Forms the virion spikes together with glycoprotein G2. The glycoprotein spike trimers are connected to the underlying matrix. Interacts with the host receptor leading to virus endocytosis. Its function is as follows. Forms the virion spikes together with glycoprotein G1. The glycoprotein spike trimers are connected to the underlying matrix. Class I viral fusion protein that directs fusion of viral and host endosomal membranes, leading to delivery of the nucleocapsid into the cytoplasm. Membrane fusion is mediated by irreversible conformational changes induced by acidification. The chain is Pre-glycoprotein polyprotein GP complex from Chapare mammarenavirus (isolate Human/Bolivia/810419/2003).